Reading from the N-terminus, the 554-residue chain is CTP synthase (554 aa).

Positions 1–265 are amidoligase domain; that stretch reads MTPLIFVTGG…DEIVIDQFKL (265 aa). Residue Ser13 participates in CTP binding. Residue Ser13 coordinates UTP. Residues 14 to 19 and Asp71 each bind ATP; that span reads SLGKGI. Mg(2+)-binding residues include Asp71 and Glu139. CTP-binding positions include 146 to 148, 186 to 191, and Lys222; these read DIE and KTKPTQ. UTP contacts are provided by residues 186–191 and Lys222; that span reads KTKPTQ. The region spanning 292–545 is the Glutamine amidotransferase type-1 domain; sequence TIAVVGKYVD…VKASRARKAG (254 aa). Gly353 contacts L-glutamine. Cys380 functions as the Nucleophile; for glutamine hydrolysis in the catalytic mechanism. Residues 381 to 384, Glu404, and Arg471 each bind L-glutamine; that span reads YGMQ. Catalysis depends on residues His518 and Glu520.

The protein belongs to the CTP synthase family. Homotetramer.

It carries out the reaction UTP + L-glutamine + ATP + H2O = CTP + L-glutamate + ADP + phosphate + 2 H(+). The catalysed reaction is L-glutamine + H2O = L-glutamate + NH4(+). The enzyme catalyses UTP + NH4(+) + ATP = CTP + ADP + phosphate + 2 H(+). It functions in the pathway pyrimidine metabolism; CTP biosynthesis via de novo pathway; CTP from UDP: step 2/2. Its activity is regulated as follows. Allosterically activated by GTP, when glutamine is the substrate; GTP has no effect on the reaction when ammonia is the substrate. The allosteric effector GTP functions by stabilizing the protein conformation that binds the tetrahedral intermediate(s) formed during glutamine hydrolysis. Inhibited by the product CTP, via allosteric rather than competitive inhibition. Its function is as follows. Catalyzes the ATP-dependent amination of UTP to CTP with either L-glutamine or ammonia as the source of nitrogen. Regulates intracellular CTP levels through interactions with the four ribonucleotide triphosphates. In Xylella fastidiosa (strain M23), this protein is CTP synthase.